The sequence spans 240 residues: Ribonuclease PH (240 aa).

Phosphate contacts are provided by residues Arg87 and 125-127; that span reads GTR.

This sequence belongs to the RNase PH family. As to quaternary structure, homohexameric ring arranged as a trimer of dimers.

The catalysed reaction is tRNA(n+1) + phosphate = tRNA(n) + a ribonucleoside 5'-diphosphate. In terms of biological role, phosphorolytic 3'-5' exoribonuclease that plays an important role in tRNA 3'-end maturation. Removes nucleotide residues following the 3'-CCA terminus of tRNAs; can also add nucleotides to the ends of RNA molecules by using nucleoside diphosphates as substrates, but this may not be physiologically important. Probably plays a role in initiation of 16S rRNA degradation (leading to ribosome degradation) during starvation. The protein is Ribonuclease PH of Dictyoglomus turgidum (strain DSM 6724 / Z-1310).